The chain runs to 297 residues: Beta-glucoside kinase (297 aa).

5-11 (AFDIGGT) is a binding site for ATP.

It belongs to the ROK (NagC/XylR) family. Homotetramer.

The enzyme catalyses D-cellobiose + ATP = 6-phospho-beta-D-glucosyl-(1-&gt;4)-D-glucose + ADP + H(+). With respect to regulation, is inhibited by N-ethylmaleimide in vitro, but ATP affords considerable protection against the inhibitor. In terms of biological role, catalyzes the ATP-dependent phosphorylation of a wide variety of beta-D-glucosides, to produce 6-phospho-beta-D-glucosides including cellobiose-6'-P, gentiobiose-6'-P, cellobiitol-6-P, salicin-6-P, and arbutin-6-P. Is not able to phosphorylate alpha-D-glucosides. May have a dual role of kinase and transcriptional regulator of the cellobiose-PTS operon. In Klebsiella pneumoniae, this protein is Beta-glucoside kinase (bglK).